The chain runs to 211 residues: Large ribosomal subunit protein bL25 (211 aa).

Disordered stretches follow at residues M1 to Q23 and L191 to V211. The segment covering N196 to V211 has biased composition (acidic residues).

The protein belongs to the bacterial ribosomal protein bL25 family. CTC subfamily. As to quaternary structure, part of the 50S ribosomal subunit; part of the 5S rRNA/L5/L18/L25 subcomplex. Contacts the 5S rRNA. Binds to the 5S rRNA independently of L5 and L18.

This is one of the proteins that binds to the 5S RNA in the ribosome where it forms part of the central protuberance. This Dinoroseobacter shibae (strain DSM 16493 / NCIMB 14021 / DFL 12) protein is Large ribosomal subunit protein bL25.